Reading from the N-terminus, the 373-residue chain is Glutamate 5-kinase (373 aa).

Residue Lys15 coordinates ATP. The substrate site is built by Ser55, Asp142, and Asn154. ATP contacts are provided by residues 174–175 (TD) and 216–222 (TGGMATK). Residues 281–359 (AGRIIVDDGA…SRIEAILGYR (79 aa)) form the PUA domain.

The protein belongs to the glutamate 5-kinase family.

Its subcellular location is the cytoplasm. The enzyme catalyses L-glutamate + ATP = L-glutamyl 5-phosphate + ADP. It participates in amino-acid biosynthesis; L-proline biosynthesis; L-glutamate 5-semialdehyde from L-glutamate: step 1/2. In terms of biological role, catalyzes the transfer of a phosphate group to glutamate to form L-glutamate 5-phosphate. In Pelobacter propionicus (strain DSM 2379 / NBRC 103807 / OttBd1), this protein is Glutamate 5-kinase.